We begin with the raw amino-acid sequence, 259 residues long: Methyltransferase afvD (259 aa).

It belongs to the class I-like SAM-binding methyltransferase superfamily.

It functions in the pathway secondary metabolite biosynthesis. In terms of biological role, methyltransferase; part of the gene cluster that mediates the biosynthesis of aflavarin, a bicoumarin that exhibits anti-insectan activity against the fungivorous beetle C.hemipterus. The polypeptide is Methyltransferase afvD (Aspergillus flavus (strain ATCC 200026 / FGSC A1120 / IAM 13836 / NRRL 3357 / JCM 12722 / SRRC 167)).